The chain runs to 278 residues: MVYQKQEPKKKKAIKPYHRIKAHANPASDYNFYYPTGPESYDWTKNYPQQAMNEKKVEIADVGCGYGGLLISLSSLFPERLSVGMELRDKVVQYVEERIDKLREKHVGQFQNISVIRTNAMKYLPNYFEKGQLQKIFFLFPDPHFKKATHKRRIISPTLLSEYAYILAPGAYAYFISDVEELYLWMFEHFKNHPLFEQVERDIAENDSCIPLIVNSTEEGRKVNRIDGKKWFAVFRRITDPSKKDLTFKNYTLTSPKEIDSTTTTTTSTATITEVESK.

S-adenosyl-L-methionine contacts are provided by residues glycine 63, 86 to 87, 119 to 120, and leucine 139; these read EL and NA. Aspartate 142 is an active-site residue. Position 217 to 219 (217 to 219) interacts with S-adenosyl-L-methionine; that stretch reads TEE. Positions 259–278 are disordered; it reads IDSTTTTTTSTATITEVESK. Low complexity predominate over residues 261-278; that stretch reads STTTTTTSTATITEVESK.

This sequence belongs to the class I-like SAM-binding methyltransferase superfamily. TrmB family.

Its subcellular location is the nucleus. The enzyme catalyses guanosine(46) in tRNA + S-adenosyl-L-methionine = N(7)-methylguanosine(46) in tRNA + S-adenosyl-L-homocysteine. It participates in tRNA modification; N(7)-methylguanine-tRNA biosynthesis. In terms of biological role, catalyzes the formation of N(7)-methylguanine at position 46 (m7G46) in tRNA. The chain is tRNA (guanine-N(7)-)-methyltransferase (mettl1) from Dictyostelium discoideum (Social amoeba).